The sequence spans 292 residues: Formamidopyrimidine-DNA glycosylase (292 aa).

Catalysis depends on Pro2, which acts as the Schiff-base intermediate with DNA. Glu3 functions as the Proton donor in the catalytic mechanism. Residue Lys58 is the Proton donor; for beta-elimination activity of the active site. DNA is bound by residues His98, Arg128, and Arg173. The FPG-type zinc finger occupies 258–292 (LVYDRAGQPCRVCATPVRQIVQGQRSTFYCPNCQH). Catalysis depends on Arg282, which acts as the Proton donor; for delta-elimination activity.

It belongs to the FPG family. In terms of assembly, monomer. The cofactor is Zn(2+).

It carries out the reaction Hydrolysis of DNA containing ring-opened 7-methylguanine residues, releasing 2,6-diamino-4-hydroxy-5-(N-methyl)formamidopyrimidine.. The enzyme catalyses 2'-deoxyribonucleotide-(2'-deoxyribose 5'-phosphate)-2'-deoxyribonucleotide-DNA = a 3'-end 2'-deoxyribonucleotide-(2,3-dehydro-2,3-deoxyribose 5'-phosphate)-DNA + a 5'-end 5'-phospho-2'-deoxyribonucleoside-DNA + H(+). Its function is as follows. Involved in base excision repair of DNA damaged by oxidation or by mutagenic agents. Acts as a DNA glycosylase that recognizes and removes damaged bases. Has a preference for oxidized purines, such as 7,8-dihydro-8-oxoguanine (8-oxoG). Has AP (apurinic/apyrimidinic) lyase activity and introduces nicks in the DNA strand. Cleaves the DNA backbone by beta-delta elimination to generate a single-strand break at the site of the removed base with both 3'- and 5'-phosphates. This chain is Formamidopyrimidine-DNA glycosylase, found in Cupriavidus necator (strain ATCC 17699 / DSM 428 / KCTC 22496 / NCIMB 10442 / H16 / Stanier 337) (Ralstonia eutropha).